Reading from the N-terminus, the 242-residue chain is Carbendazim hydrolyzing esterase (242 aa).

Ser77 functions as the Acyl-ester intermediate in the catalytic mechanism.

This sequence belongs to the AB hydrolase superfamily.

It is found in the secreted. It carries out the reaction carbendazim + H2O = 2-aminobenzimidazole + methanol + CO2. The catalysed reaction is carbendazim + H2O = N-(1H-1,3-benzodiazol-2-yl)carbamate + methanol + H(+). It catalyses the reaction N-(1H-1,3-benzodiazol-2-yl)carbamate + H(+) = 2-aminobenzimidazole + CO2. In terms of biological role, catalyzes the hydrolysis of the fungicide carbendazim (methyl-1H-benzimidazol-2-ylcarbamate or MBC) to 2-aminobenzimidazole (2-AB). Following hydrolysis of the carbamate ester, the carbamate decarboxylates spontaneously. Can hydrolyze model carboxylesters such as methyl salicylate, alpha-naphthyl acetate and p-nitrophenyl acetate. In addition, shows substantial hydrolytic activity in vitro against widespread pollutants with carboxylester, carbamate and amide linkages, such as dimethyl phthalate, propanil and chlorpropham. The protein is Carbendazim hydrolyzing esterase of Nocardioides sp. (strain SG-4G).